We begin with the raw amino-acid sequence, 216 residues long: MLGIGAFKQRMPRSGEALPGRTQALPLHNTHLINGHPLRGEFTGLAQVQFGLGCFWGAERKFWNVPGVYTTAVGYAGGKTPNATYSEVCSGQTGHTEAVLVVYDAQAVSFEQLLRTFWESHDPTQGMQQGNDVGTQYRSAIYCSTQAQYDAAIASRDAYQQQLTAAGYGDITTEILYPAPTFYYAEDDHQQYLAKHPNGYCGLGGTGVSCPIGLDA.

Cys-54 is an active-site residue.

The protein belongs to the MsrA Met sulfoxide reductase family.

The enzyme catalyses L-methionyl-[protein] + [thioredoxin]-disulfide + H2O = L-methionyl-(S)-S-oxide-[protein] + [thioredoxin]-dithiol. It carries out the reaction [thioredoxin]-disulfide + L-methionine + H2O = L-methionine (S)-S-oxide + [thioredoxin]-dithiol. In terms of biological role, has an important function as a repair enzyme for proteins that have been inactivated by oxidation. Catalyzes the reversible oxidation-reduction of methionine sulfoxide in proteins to methionine. This chain is Peptide methionine sulfoxide reductase MsrA, found in Xanthomonas campestris pv. campestris (strain ATCC 33913 / DSM 3586 / NCPPB 528 / LMG 568 / P 25).